The chain runs to 682 residues: DNA ligase (682 aa).

Residues 42 to 46, 88 to 89, and Glu121 each bind NAD(+); these read DAAYD and SL. Residue Lys123 is the N6-AMP-lysine intermediate of the active site. Residues Arg144, Glu180, Lys291, and Lys315 each coordinate NAD(+). Cys409, Cys412, Cys427, and Cys433 together coordinate Zn(2+). Residues 601–682 enclose the BRCT domain; the sequence is AAGGALAGKT…FRSLAGLPPG (82 aa).

The protein belongs to the NAD-dependent DNA ligase family. LigA subfamily. Mg(2+) is required as a cofactor. Mn(2+) serves as cofactor.

The enzyme catalyses NAD(+) + (deoxyribonucleotide)n-3'-hydroxyl + 5'-phospho-(deoxyribonucleotide)m = (deoxyribonucleotide)n+m + AMP + beta-nicotinamide D-nucleotide.. DNA ligase that catalyzes the formation of phosphodiester linkages between 5'-phosphoryl and 3'-hydroxyl groups in double-stranded DNA using NAD as a coenzyme and as the energy source for the reaction. It is essential for DNA replication and repair of damaged DNA. The sequence is that of DNA ligase from Acidiphilium cryptum (strain JF-5).